The primary structure comprises 513 residues: Xylose import ATP-binding protein XylG (513 aa).

ABC transporter domains are found at residues 5 to 242 and 259 to 505; these read LEMK…VERE and LRIE…LRSE. 37–44 serves as a coordination point for ATP; the sequence is GENGSGKS.

Belongs to the ABC transporter superfamily. Xylose importer (TC 3.A.1.2.4) family. In terms of assembly, the complex is composed of two ATP-binding proteins (XylG), two transmembrane proteins (XylH) and a solute-binding protein (XylF).

The protein localises to the cell inner membrane. It catalyses the reaction D-xylose(out) + ATP + H2O = D-xylose(in) + ADP + phosphate + H(+). Its function is as follows. Part of the ABC transporter complex XylFGH involved in xylose import. Responsible for energy coupling to the transport system. In Shigella flexneri, this protein is Xylose import ATP-binding protein XylG.